A 270-amino-acid chain; its full sequence is Co-chaperone protein DjlA (270 aa).

Topologically, residues 1–6 (MQYWGK) are periplasmic. Residues 7–31 (IIGVAVALMMGGGFWGVVLGLLVGH) traverse the membrane as a helical segment. At 32–270 (MFDKARSRKM…ELIKEQKGFK (239 aa)) the chain is on the cytoplasmic side. The 67-residue stretch at 204 to 270 (DACNVLGVKT…ELIKEQKGFK (67 aa)) folds into the J domain.

Homodimer.

Its subcellular location is the cell inner membrane. Functionally, regulatory DnaK co-chaperone. Direct interaction between DnaK and DjlA is needed for the induction of the wcaABCDE operon, involved in the synthesis of a colanic acid polysaccharide capsule, possibly through activation of the RcsB/RcsC phosphotransfer signaling pathway. The colanic acid capsule may help the bacterium survive conditions outside the host. This Salmonella paratyphi A (strain ATCC 9150 / SARB42) protein is Co-chaperone protein DjlA.